The sequence spans 404 residues: E3 ubiquitin-protein ligase RNF128 (404 aa).

The signal sequence occupies residues 1–31; that stretch reads MGALKMRCQCFPLPYLSLLALLLLNLSLTRA. The region spanning 62-166 is the PA domain; that stretch reads DSPIERAAGL…LKGNEIVDLI (105 aa). The chain crosses the membrane as a helical span at residues 191–211; that stretch reads IFFVSVSFFIVTAATVGYFIF. The segment at 260-301 adopts an RING-type; atypical zinc-finger fold; it reads CAVCIEPYKPSDVVRILTCNHFFHKNCIDPWLLEHRTCPMCK. Positions 336-356 are disordered; that stretch reads ITEEENHSETASSGYASVRGG.

Auto-ubiquitinated. In terms of tissue distribution, expressed in the cement gland, cranial placodes, and the pronephros.

Its subcellular location is the endomembrane system. The protein resides in the cytoplasm. It localises to the perinuclear region. It catalyses the reaction S-ubiquitinyl-[E2 ubiquitin-conjugating enzyme]-L-cysteine + [acceptor protein]-L-lysine = [E2 ubiquitin-conjugating enzyme]-L-cysteine + N(6)-ubiquitinyl-[acceptor protein]-L-lysine.. It functions in the pathway protein modification; protein ubiquitination. In terms of biological role, E3 ubiquitin-protein ligase that catalyzes polyubiquitin chains. Converts epidermis into cement gland and neural tissue in whole embryos. The sequence is that of E3 ubiquitin-protein ligase RNF128 (rnf128) from Xenopus laevis (African clawed frog).